The chain runs to 439 residues: Cysteine--tRNA ligase (439 aa).

C28 contributes to the Zn(2+) binding site. The short motif at 30–40 is the 'HIGH' region element; it reads ITVYDLCHIGH. Zn(2+) is bound by residues C209, H234, and E238. A 'KMSKS' region motif is present at residues 266–270; the sequence is KMSKS. Position 269 (K269) interacts with ATP.

Belongs to the class-I aminoacyl-tRNA synthetase family. Monomer. Zn(2+) is required as a cofactor.

The protein localises to the cytoplasm. The enzyme catalyses tRNA(Cys) + L-cysteine + ATP = L-cysteinyl-tRNA(Cys) + AMP + diphosphate. The protein is Cysteine--tRNA ligase of Shigella boydii serotype 4 (strain Sb227).